The following is a 445-amino-acid chain: Phosphoglucosamine mutase (445 aa).

The active-site Phosphoserine intermediate is S102. The Mg(2+) site is built by S102, D241, D243, and D245. S102 bears the Phosphoserine mark.

This sequence belongs to the phosphohexose mutase family. Requires Mg(2+) as cofactor. In terms of processing, activated by phosphorylation.

The enzyme catalyses alpha-D-glucosamine 1-phosphate = D-glucosamine 6-phosphate. Catalyzes the conversion of glucosamine-6-phosphate to glucosamine-1-phosphate. The sequence is that of Phosphoglucosamine mutase from Klebsiella pneumoniae (strain 342).